Consider the following 233-residue polypeptide: Ribose-5-phosphate isomerase A (233 aa).

Residues Ser-31 to Thr-34, Asp-87 to Asp-90, and Lys-100 to Gly-103 contribute to the substrate site. The active-site Proton acceptor is the Glu-109. Lys-127 serves as a coordination point for substrate.

It belongs to the ribose 5-phosphate isomerase family. Homodimer.

The catalysed reaction is aldehydo-D-ribose 5-phosphate = D-ribulose 5-phosphate. The protein operates within carbohydrate degradation; pentose phosphate pathway; D-ribose 5-phosphate from D-ribulose 5-phosphate (non-oxidative stage): step 1/1. In terms of biological role, catalyzes the reversible conversion of ribose-5-phosphate to ribulose 5-phosphate. The protein is Ribose-5-phosphate isomerase A of Chlamydia felis (strain Fe/C-56) (Chlamydophila felis).